The following is a 277-amino-acid chain: WRKY transcription factor 68 (277 aa).

The segment at 51-96 is disordered; sequence TPLMHFPTTPNSSSSEAVNGDDEEEEDGEEQQHKTKKRFKFTKMSR. A compositionally biased stretch (polar residues) spans 58 to 67; that stretch reads TTPNSSSSEA. Acidic residues predominate over residues 69–79; the sequence is NGDDEEEEDGE. A compositionally biased stretch (basic residues) spans 84–96; the sequence is KTKKRFKFTKMSR. Residues 112–177 constitute a DNA-binding region (WRKY); sequence SEVLHLDDGY…YEGQHTHPRP (66 aa). A disordered region spans residues 183 to 206; that stretch reads KEGSSPSNGSASRAHIGLPTLPPQ.

This sequence belongs to the WRKY group II-c family.

It is found in the nucleus. Functionally, transcription factor. Interacts specifically with the W box (5'-(T)TGAC[CT]-3'), a frequently occurring elicitor-responsive cis-acting element. This chain is WRKY transcription factor 68 (WRKY68), found in Arabidopsis thaliana (Mouse-ear cress).